A 346-amino-acid chain; its full sequence is Acetylserotonin O-methyltransferase (346 aa).

S-adenosyl-L-methionine contacts are provided by residues tyrosine 148, tryptophan 165, aspartate 211, glycine 236–phenylalanine 238, and lysine 253. Histidine 256 (proton donor/acceptor) is an active-site residue. Residues aspartate 257, asparagine 303, and glutamine 307 each coordinate substrate.

The protein belongs to the class I-like SAM-binding methyltransferase superfamily. Cation-independent O-methyltransferase family. Homodimer. In terms of tissue distribution, expressed in pineal gland and retina.

It catalyses the reaction N-acetylserotonin + S-adenosyl-L-methionine = melatonin + S-adenosyl-L-homocysteine + H(+). The protein operates within aromatic compound metabolism; melatonin biosynthesis; melatonin from serotonin: step 1/2. Catalyzes the transfer of a methyl group onto N-acetylserotonin, producing melatonin (N-acetyl-5-methoxytryptamine). In Gallus gallus (Chicken), this protein is Acetylserotonin O-methyltransferase (ASMT).